Consider the following 447-residue polypeptide: Tyrosine aminotransferase (447 aa).

Lys273 is subject to N6-(pyridoxal phosphate)lysine. At Ser441 the chain carries Phosphoserine.

It belongs to the class-I pyridoxal-phosphate-dependent aminotransferase family. Homodimer. The cofactor is pyridoxal 5'-phosphate.

It catalyses the reaction L-tyrosine + 2-oxoglutarate = 3-(4-hydroxyphenyl)pyruvate + L-glutamate. It participates in amino-acid degradation; L-phenylalanine degradation; acetoacetate and fumarate from L-phenylalanine: step 2/6. Its function is as follows. Transaminase involved in tyrosine breakdown. Converts tyrosine to p-hydroxyphenylpyruvate. Can catalyze the reverse reaction, using glutamic acid, with 2-oxoglutarate as cosubstrate (in vitro). Has much lower affinity and transaminase activity for phenylalanine. The protein is Tyrosine aminotransferase (TAT) of Bos taurus (Bovine).